Here is a 140-residue protein sequence, read N- to C-terminus: uncharacterized protein (140 aa).

This is an uncharacterized protein from Synechococcus sp. (strain WH8020).